A 355-amino-acid chain; its full sequence is Protein DVR-1 (355 aa).

A signal peptide spans 1-15 (MFLVLLRACLLTLSL). Residues 16–240 (CSPAEDDGLV…PLQCRSRRKR (225 aa)) constitute a propeptide that is removed on maturation. Residues Asn108, Asn179, and Asn296 are each glycosylated (N-linked (GlcNAc...) asparagine). Disulfide bonds link Cys254–Cys320, Cys283–Cys352, and Cys287–Cys354.

The protein belongs to the TGF-beta family. Homodimer. Abundant in ovaries and eggs, and equally distributed among all blastomeres.

The protein resides in the secreted. In terms of biological role, serves to facilitate the differentiation of either mesoderm or endoderm either as a cofactor in an instructive signal or by providing permissive environment. In Danio rerio (Zebrafish), this protein is Protein DVR-1 (dvr1).